Consider the following 348-residue polypeptide: Spermatogenesis-associated protein 32 (348 aa).

Over residues 27-36 (YHHHHHPLED) the composition is skewed to basic and acidic residues. The segment at 27–61 (YHHHHHPLEDNKDEDNEMGTELSSMKPPPKVDPDP) is disordered. A phosphoserine mark is found at S149 and S152. The segment at 308–329 (APATSPELQEDKDDSVPGTKKG) is disordered. Phosphothreonine is present on T330.

Interacts with syntaxin-1 and ACTB. As to expression, abundantly expressed in testes. Expressed in germ cells, but not in Sertoli or Leydig cells of the adult testis. Localized at the acrosomal region of the round and elongated spermatids at stages VIII-X.

The chain is Spermatogenesis-associated protein 32 (Spata32) from Rattus norvegicus (Rat).